The sequence spans 322 residues: Putative heme-binding peroxidase (322 aa).

His38 (proton acceptor) is an active-site residue. Residue His162 participates in heme b binding. The active-site Tryptophan radical intermediate is Trp178. A disordered region spans residues 288–322 (ISAPKKSNHPTGPAKGAQGGCPVAASQGGCPRAKL).

The protein belongs to the peroxidase family. Cytochrome c peroxidase subfamily. Heme b is required as a cofactor.

Destroys radicals which are normally produced within the cells and which are toxic to biological systems. This Aspergillus fumigatus (strain ATCC MYA-4609 / CBS 101355 / FGSC A1100 / Af293) (Neosartorya fumigata) protein is Putative heme-binding peroxidase.